The primary structure comprises 201 residues: Putative manganese efflux pump MntP 2 (201 aa).

6 helical membrane-spanning segments follow: residues 3 to 23 (LISV…VSIT), 39 to 59 (IGLF…SIGI), 65 to 85 (IAAL…GKMI), 116 to 136 (LILL…SFAF), 141 to 161 (IINT…IGVM), and 176 to 196 (ILGG…HTNI).

Belongs to the MntP (TC 9.B.29) family.

The protein localises to the cell membrane. Functionally, probably functions as a manganese efflux pump. This chain is Putative manganese efflux pump MntP 2, found in Clostridium botulinum (strain Hall / ATCC 3502 / NCTC 13319 / Type A).